Here is a 424-residue protein sequence, read N- to C-terminus: Serine--tRNA ligase (424 aa).

233 to 235 lines the L-serine pocket; sequence TAE. 264–266 provides a ligand contact to ATP; it reads RRE. E287 provides a ligand contact to L-serine. 351–354 lines the ATP pocket; it reads EISS. S386 provides a ligand contact to L-serine.

Belongs to the class-II aminoacyl-tRNA synthetase family. Type-1 seryl-tRNA synthetase subfamily. As to quaternary structure, homodimer. The tRNA molecule binds across the dimer.

The protein localises to the cytoplasm. The catalysed reaction is tRNA(Ser) + L-serine + ATP = L-seryl-tRNA(Ser) + AMP + diphosphate + H(+). The enzyme catalyses tRNA(Sec) + L-serine + ATP = L-seryl-tRNA(Sec) + AMP + diphosphate + H(+). It functions in the pathway aminoacyl-tRNA biosynthesis; selenocysteinyl-tRNA(Sec) biosynthesis; L-seryl-tRNA(Sec) from L-serine and tRNA(Sec): step 1/1. In terms of biological role, catalyzes the attachment of serine to tRNA(Ser). Is also able to aminoacylate tRNA(Sec) with serine, to form the misacylated tRNA L-seryl-tRNA(Sec), which will be further converted into selenocysteinyl-tRNA(Sec). The protein is Serine--tRNA ligase of Pseudothermotoga lettingae (strain ATCC BAA-301 / DSM 14385 / NBRC 107922 / TMO) (Thermotoga lettingae).